Here is a 141-residue protein sequence, read N- to C-terminus: HTH-type transcriptional repressor NsrR (141 aa).

Positions 2-129 constitute an HTH rrf2-type domain; that stretch reads QLTSFTDYGL…DSHTLADMVE (128 aa). A DNA-binding region (H-T-H motif) is located at residues 28–51; sequence ISEVTEVYGVSRNHMVKIINQLSR. Residues Cys91, Cys96, and Cys102 each contribute to the [2Fe-2S] cluster site.

[2Fe-2S] cluster serves as cofactor.

Nitric oxide-sensitive repressor of genes involved in protecting the cell against nitrosative stress. May require iron for activity. The protein is HTH-type transcriptional repressor NsrR of Serratia proteamaculans (strain 568).